Consider the following 220-residue polypeptide: Iron-sulfur cluster repair protein YtfE (220 aa).

The protein belongs to the RIC family. YtfE subfamily. As to quaternary structure, homodimer.

The protein resides in the cytoplasm. Its function is as follows. Di-iron-containing protein involved in the repair of iron-sulfur clusters damaged by oxidative and nitrosative stress conditions. The protein is Iron-sulfur cluster repair protein YtfE of Enterobacter sp. (strain 638).